A 274-amino-acid polypeptide reads, in one-letter code: NADPH-dependent 7-cyano-7-deazaguanine reductase (274 aa).

Residues 1-33 form a disordered region; the sequence is MPKKDALDHLSLGQHTDYPNEYDPKQLQPVPRS. Position 84–86 (84–86) interacts with substrate; that stretch reads IES. 86 to 87 contacts NADPH; it reads SK. Cysteine 183 acts as the Thioimide intermediate in catalysis. Aspartate 190 functions as the Proton donor in the catalytic mechanism. A substrate-binding site is contributed by 222-223; that stretch reads HE. Position 250–251 (250–251) interacts with NADPH; sequence RG.

It belongs to the GTP cyclohydrolase I family. QueF type 2 subfamily. In terms of assembly, homodimer.

The protein resides in the cytoplasm. It catalyses the reaction 7-aminomethyl-7-carbaguanine + 2 NADP(+) = 7-cyano-7-deazaguanine + 2 NADPH + 3 H(+). It functions in the pathway tRNA modification; tRNA-queuosine biosynthesis. Catalyzes the NADPH-dependent reduction of 7-cyano-7-deazaguanine (preQ0) to 7-aminomethyl-7-deazaguanine (preQ1). This is NADPH-dependent 7-cyano-7-deazaguanine reductase from Idiomarina loihiensis (strain ATCC BAA-735 / DSM 15497 / L2-TR).